We begin with the raw amino-acid sequence, 156 residues long: Endogenous retrovirus group K member 18 Pro protein (156 aa).

The 76-residue stretch at 21–96 (LEGLVDTGAD…IPLNLWGRDL (76 aa)) folds into the Peptidase A2 domain. The active site involves aspartate 26. One can recognise a G-patch domain in the interval 111–156 (YSPMSQKIMTKMGYIPGKGLGKNEDGIKVPIEAKINHGREGTGYPF).

The protein belongs to the peptidase A2 family. HERV class-II K(HML-2) subfamily. In terms of assembly, active as a homodimer. In terms of processing, autoproteolytically processed at the N-terminus. Expected C-terminal autoprocessing not detected. The sequence shown is that of the processed Pro protein.

The enzyme catalyses Processing at the authentic HIV-1 PR recognition site and release of the mature p17 matrix and the p24 capsid protein, as a result of the cleavage of the -SQNY-|-PIVQ- cleavage site.. Retroviral proteases have roles in the processing of the primary translation products and the maturation of the viral particle. Endogenous Pro proteins may have kept, lost or modified their original function during evolution. The chain is Endogenous retrovirus group K member 18 Pro protein (ERVK-18) from Homo sapiens (Human).